The primary structure comprises 121 residues: Basic phospholipase A2 homolog blK-PLA2 (121 aa).

7 cysteine pairs are disulfide-bonded: C26–C115, C28–C44, C43–C95, C49–C121, C50–C88, C57–C81, and C75–C86. Residues K105–K117 are important for membrane-damaging activities in eukaryotes and bacteria; heparin-binding.

This sequence belongs to the phospholipase A2 family. Group II subfamily. K49 sub-subfamily. Homodimer; non-covalently linked. Expressed by the venom gland.

The protein resides in the secreted. Its function is as follows. Snake venom phospholipase A2 (PLA2) homolog that lacks enzymatic activity. Shows myotoxic and edema-inducing activities in vivo. A model of myotoxic mechanism has been proposed: an apo Lys49-PLA2 is activated by the entrance of a hydrophobic molecule (e.g. fatty acid) at the hydrophobic channel of the protein leading to a reorientation of a monomer. This reorientation causes a transition between 'inactive' to 'active' states, causing alignment of C-terminal and membrane-docking sites (MDoS) side-by-side and putting the membrane-disruption sites (MDiS) in the same plane, exposed to solvent and in a symmetric position for both monomers. The MDoS region stabilizes the toxin on membrane by the interaction of charged residues with phospholipid head groups. Subsequently, the MDiS region destabilizes the membrane with penetration of hydrophobic residues. This insertion causes a disorganization of the membrane, allowing an uncontrolled influx of ions (i.e. calcium and sodium), and eventually triggering irreversible intracellular alterations and cell death. The sequence is that of Basic phospholipase A2 homolog blK-PLA2 from Bothrops leucurus (Whitetail lancehead).